The sequence spans 196 residues: Peptidyl-tRNA hydrolase (196 aa).

Tyr17 lines the tRNA pocket. The Proton acceptor role is filled by His22. Phe68, Asn70, and Asn116 together coordinate tRNA.

It belongs to the PTH family. Monomer.

It localises to the cytoplasm. It carries out the reaction an N-acyl-L-alpha-aminoacyl-tRNA + H2O = an N-acyl-L-amino acid + a tRNA + H(+). Functionally, hydrolyzes ribosome-free peptidyl-tRNAs (with 1 or more amino acids incorporated), which drop off the ribosome during protein synthesis, or as a result of ribosome stalling. Catalyzes the release of premature peptidyl moieties from peptidyl-tRNA molecules trapped in stalled 50S ribosomal subunits, and thus maintains levels of free tRNAs and 50S ribosomes. The chain is Peptidyl-tRNA hydrolase from Photorhabdus laumondii subsp. laumondii (strain DSM 15139 / CIP 105565 / TT01) (Photorhabdus luminescens subsp. laumondii).